A 60-amino-acid polypeptide reads, in one-letter code: LKCHKLVPPVWKTCPEGKNLCYKMFMVSTSTVPVKRGCIDVCPKDSALVKYVCCSTDKCN.

Intrachain disulfides connect Cys3–Cys21, Cys14–Cys38, Cys42–Cys53, and Cys54–Cys59.

This sequence belongs to the three-finger toxin family. Short-chain subfamily. Type IA cytotoxin sub-subfamily. In terms of assembly, monomer in solution; Homodimer and oligomer in the presence of negatively charged lipids forming a pore with a size ranging between 20 and 30 Angstroms. As to expression, expressed by the venom gland.

The protein localises to the secreted. It is found in the target cell membrane. Functionally, shows cytolytic activity on many different cells by forming pore in lipid membranes. In vivo, increases heart rate or kills the animal by cardiac arrest. In addition, it binds to heparin with high affinity, interacts with Kv channel-interacting protein 1 (KCNIP1) in a calcium-independent manner, and binds to integrin alpha-V/beta-3 (ITGAV/ITGB3) with moderate affinity. This Naja nivea (Cape cobra) protein is Cytotoxin 1.